The sequence spans 147 residues: Ribonuclease H (147 aa).

In terms of domain architecture, RNase H type-1 spans 1 to 142; that stretch reads MREVIIYTDG…CDELARAAIA (142 aa). 4 residues coordinate Mg(2+): D9, E47, D69, and D134.

The protein belongs to the RNase H family. As to quaternary structure, monomer. It depends on Mg(2+) as a cofactor.

It is found in the cytoplasm. The enzyme catalyses Endonucleolytic cleavage to 5'-phosphomonoester.. Its function is as follows. Endonuclease that specifically degrades the RNA of RNA-DNA hybrids. In Symbiobacterium thermophilum (strain DSM 24528 / JCM 14929 / IAM 14863 / T), this protein is Ribonuclease H.